A 35-amino-acid chain; its full sequence is Potassium channel toxin alpha-KTx 23.2 (35 aa).

3 cysteine pairs are disulfide-bonded: C6–C26, C12–C31, and C16–C33.

This sequence belongs to the short scorpion toxin superfamily. Potassium channel inhibitor family. Alpha-KTx 23 subfamily. Expressed by the venom gland.

It is found in the secreted. In terms of biological role, selectively and irreversibly binds (K(d)=2.9 pM) and blocks Kv1.3/KCNA3 potassium channels of human T-lymphocytes. Weakly blocks Kv1.2/KCNA2 (9%). This chain is Potassium channel toxin alpha-KTx 23.2, found in Vaejovis mexicanus smithi (Mexican scorpion).